A 616-amino-acid chain; its full sequence is Dihydroxy-acid dehydratase (616 aa).

Mg(2+) is bound at residue Asp-81. Cys-122 is a binding site for [2Fe-2S] cluster. Asp-123 and Lys-124 together coordinate Mg(2+). Lys-124 bears the N6-carboxylysine mark. Cys-195 is a binding site for [2Fe-2S] cluster. Glu-491 serves as a coordination point for Mg(2+). Ser-517 serves as the catalytic Proton acceptor.

Belongs to the IlvD/Edd family. As to quaternary structure, homodimer. It depends on [2Fe-2S] cluster as a cofactor. Mg(2+) serves as cofactor.

The enzyme catalyses (2R)-2,3-dihydroxy-3-methylbutanoate = 3-methyl-2-oxobutanoate + H2O. The catalysed reaction is (2R,3R)-2,3-dihydroxy-3-methylpentanoate = (S)-3-methyl-2-oxopentanoate + H2O. It participates in amino-acid biosynthesis; L-isoleucine biosynthesis; L-isoleucine from 2-oxobutanoate: step 3/4. Its pathway is amino-acid biosynthesis; L-valine biosynthesis; L-valine from pyruvate: step 3/4. Functionally, functions in the biosynthesis of branched-chain amino acids. Catalyzes the dehydration of (2R,3R)-2,3-dihydroxy-3-methylpentanoate (2,3-dihydroxy-3-methylvalerate) into 2-oxo-3-methylpentanoate (2-oxo-3-methylvalerate) and of (2R)-2,3-dihydroxy-3-methylbutanoate (2,3-dihydroxyisovalerate) into 2-oxo-3-methylbutanoate (2-oxoisovalerate), the penultimate precursor to L-isoleucine and L-valine, respectively. The sequence is that of Dihydroxy-acid dehydratase from Escherichia fergusonii (strain ATCC 35469 / DSM 13698 / CCUG 18766 / IAM 14443 / JCM 21226 / LMG 7866 / NBRC 102419 / NCTC 12128 / CDC 0568-73).